A 320-amino-acid polypeptide reads, in one-letter code: ATP-dependent 6-phosphofructokinase (320 aa).

Gly-12 provides a ligand contact to ATP. ADP-binding positions include 22 to 26 (RGVVR) and 55 to 60 (RYSVSD). Residues 73–74 (RF) and 103–106 (GDGS) each bind ATP. Asp-104 is a binding site for Mg(2+). 126-128 (TID) serves as a coordination point for substrate. The Proton acceptor role is filled by Asp-128. Arg-155 is an ADP binding site. Substrate contacts are provided by residues Arg-163 and 170-172 (MGR). ADP is bound by residues 186–188 (GCE), Lys-212, and 214–216 (KKH). Residues Glu-223, Arg-244, and 250 to 253 (HIQR) contribute to the substrate site.

It belongs to the phosphofructokinase type A (PFKA) family. ATP-dependent PFK group I subfamily. Prokaryotic clade 'B1' sub-subfamily. In terms of assembly, homotetramer. It depends on Mg(2+) as a cofactor.

Its subcellular location is the cytoplasm. The catalysed reaction is beta-D-fructose 6-phosphate + ATP = beta-D-fructose 1,6-bisphosphate + ADP + H(+). The protein operates within carbohydrate degradation; glycolysis; D-glyceraldehyde 3-phosphate and glycerone phosphate from D-glucose: step 3/4. Allosterically activated by ADP and other diphosphonucleosides, and allosterically inhibited by phosphoenolpyruvate. Its function is as follows. Catalyzes the phosphorylation of D-fructose 6-phosphate to fructose 1,6-bisphosphate by ATP, the first committing step of glycolysis. The polypeptide is ATP-dependent 6-phosphofructokinase (Serratia proteamaculans (strain 568)).